The chain runs to 355 residues: Serum paraoxonase/arylesterase 1 (355 aa).

Cys42 and Cys353 are joined by a disulfide. Positions 53 and 54 each coordinate Ca(2+). The active-site Proton acceptor is His115. Ca(2+) contacts are provided by Ile117, Asn168, Asp169, and Asn224. The N-linked (GlcNAc...) asparagine glycan is linked to Asn253. Residues Asp269 and Asn270 each contribute to the Ca(2+) site. N-linked (GlcNAc...) asparagine glycosylation is found at Asn270 and Asn324.

It belongs to the paraoxonase family. Homodimer. Interacts with CLU. Ca(2+) is required as a cofactor. In terms of processing, the signal sequence is not cleaved. Plasma, liver, kidney, heart, brain, small intestine and lung. In the plasma, associated with HDL.

It is found in the secreted. The protein localises to the extracellular space. The enzyme catalyses a phenyl acetate + H2O = a phenol + acetate + H(+). It catalyses the reaction An aryl dialkyl phosphate + H2O = dialkyl phosphate + an aryl alcohol.. The catalysed reaction is an N-acyl-L-homoserine lactone + H2O = an N-acyl-L-homoserine + H(+). Functionally, hydrolyzes the toxic metabolites of a variety of organophosphorus insecticides. Capable of hydrolyzing a broad spectrum of organophosphate substrates and lactones, and a number of aromatic carboxylic acid esters. Mediates an enzymatic protection of low density lipoproteins against oxidative modification. The polypeptide is Serum paraoxonase/arylesterase 1 (Pon1) (Mus musculus (Mouse)).